Here is an 851-residue protein sequence, read N- to C-terminus: DNA mismatch repair protein MutS (851 aa).

Gly-614 to Ser-621 is an ATP binding site.

It belongs to the DNA mismatch repair MutS family.

Functionally, this protein is involved in the repair of mismatches in DNA. It is possible that it carries out the mismatch recognition step. This protein has a weak ATPase activity. The polypeptide is DNA mismatch repair protein MutS (Yersinia pseudotuberculosis serotype O:1b (strain IP 31758)).